The sequence spans 456 residues: Histidine--tRNA ligase (456 aa).

The tract at residues 1 to 20 (MTQSENVAAAGGAKTEPKVR) is disordered.

This sequence belongs to the class-II aminoacyl-tRNA synthetase family. In terms of assembly, homodimer.

Its subcellular location is the cytoplasm. It catalyses the reaction tRNA(His) + L-histidine + ATP = L-histidyl-tRNA(His) + AMP + diphosphate + H(+). In Cupriavidus necator (strain ATCC 17699 / DSM 428 / KCTC 22496 / NCIMB 10442 / H16 / Stanier 337) (Ralstonia eutropha), this protein is Histidine--tRNA ligase.